The following is a 617-amino-acid chain: Chaperone protein HscA homolog (617 aa).

It belongs to the heat shock protein 70 family.

Its function is as follows. Probable chaperone. Has a low intrinsic ATPase activity which is markedly stimulated by HscB. The protein is Chaperone protein HscA homolog of Vibrio parahaemolyticus serotype O3:K6 (strain RIMD 2210633).